The primary structure comprises 246 residues: MNSLLFLALVGAAVAFPVDDDDKIVGGYTCRENSIPYQVSLNSGYHFCGGSLINDQWVVSAAHCYKTRIQVRLGEHNINVLEGNEQFVNSAKIIKHPNFNSRTLNNDIMLIKLASPVTLNARVATVALPSSCAPAGTQCLISGWGNTLSFGVNNPDLLQCLDAPLLPQADCEASYPGKITNNMICVGFLEGGKDSCQGDSGGPVVCNGQLQGIVSWGYGCALKDNPGVYTKVCNYVDWIQDTIAAN.

The signal sequence occupies residues 1-15 (MNSLLFLALVGAAVA). Positions 16–23 (FPVDDDDK) are cleaved as a propeptide — activation peptide. One can recognise a Peptidase S1 domain in the interval 24 to 244 (IVGGYTCREN…YVDWIQDTIA (221 aa)). Cysteines 48 and 64 form a disulfide. Active-site charge relay system residues include H63 and D107. 3 disulfides stabilise this stretch: C139-C206, C171-C185, and C196-C220. The active-site Charge relay system is S200.

This sequence belongs to the peptidase S1 family. In terms of processing, proteolytically cleaved and activated by an autocatalytic mechanism. Cleavage by CTRC inhibits autoactivation. Expressed in the heart, lung, brain, kidney, liver, epididymis, ovary and uterus. Expression in the testis is limited to round and elongating spermatids.

The protein resides in the cytoplasmic vesicle. It is found in the secretory vesicle. The protein localises to the acrosome. The catalysed reaction is Preferential cleavage: Arg-|-Xaa, Lys-|-Xaa.. Its activity is regulated as follows. Activated by autocatalytic cleavage. Cleavage by CTRC inhibits autoactivation. Its function is as follows. Serine protease capable of autoactivation. This chain is Trypsin-5, found in Mus musculus (Mouse).